Consider the following 135-residue polypeptide: MVLESIARVIKVQLPAYLKRLPIPDSIAGFIRLTVSEWLRLLPFLGVLALLGYLAIRPFLPKKKQQKDSLINLKIQKENPKVVNEINIEDLHLAKAAYCRCWRSKTFPVCDGSHNKHNELTGDNVGPLILKKKEV.

Topologically, residues 1–37 (MVLESIARVIKVQLPAYLKRLPIPDSIAGFIRLTVSE) are lumenal. A helical transmembrane segment spans residues 38–60 (WLRLLPFLGVLALLGYLAIRPFL). Residues 61–135 (PKKKQQKDSL…GPLILKKKEV (75 aa)) lie on the Cytoplasmic side of the membrane. Residues Cys99, Cys101, Cys110, and His114 each contribute to the [2Fe-2S] cluster site.

It belongs to the CISD protein family. CISD2 subfamily. In terms of assembly, homodimer. Requires [2Fe-2S] cluster as cofactor.

The protein resides in the endoplasmic reticulum membrane. Its subcellular location is the mitochondrion outer membrane. Regulator of autophagy that contributes to antagonize becn1-mediated cellular autophagy at the endoplasmic reticulum. Participates in the interaction of bcl2 with becn1 and is required for bcl2-mediated depression of endoplasmic reticulum Ca(2+) stores during autophagy. The chain is CDGSH iron-sulfur domain-containing protein 2 (cisd2) from Xenopus tropicalis (Western clawed frog).